The sequence spans 7126 residues: Replicase polyprotein 1ab (7126 aa).

Residues 25-151 (RSDHVACTVP…EHTFLLRKNG (127 aa)) enclose the CoV Nsp1 globular domain. Residues 167 to 195 (TPYVEILDDLEADPTGKYSQNLLKKLIGG) enclose the BetaCoV Nsp1 C-terminal domain. A CoV Nsp2 N-terminal domain is found at 197-472 (CIPVDQYMCG…WDKVVETANL (276 aa)). Residues Cys-339, Cys-342, Cys-358, and Cys-360 each coordinate Zn(2+). The segment at 339 to 360 (CNACGRGTWCTGNAIQGFACDC) is C4. The 235-residue stretch at 478 to 712 (QHSLNFCQQF…LDIMSKAMKL (235 aa)) folds into the CoV Nsp2 middle domain. Residues 714 to 847 (HTNVSWAGTK…VSTLFRLKGG (134 aa)) enclose the CoV Nsp2 C-terminal domain. Positions 851–960 (KKVTFGDVNT…MTFSINPVED (110 aa)) constitute a Ubiquitin-like 1 domain. The segment at 1039–1061 (AQEPSVESTDSTPSTSTVVSEND) is disordered. Low complexity predominate over residues 1041–1059 (EPSVESTDSTPSTSTVVSE). Macro domains lie at 1159 to 1328 (DLSK…KPDG) and 1329 to 1453 (LVYS…AIQT). The DPUP domain occupies 1453-1526 (TPETAFINNV…LEACRAYLTS (74 aa)). Positions 1531 to 1586 (QVNIEVLVTIDGVNFRTVILNDATTFRKQLGATFYKGVDISDALPTVKMGGESLFV) constitute a Ubiquitin-like 2 domain. Residues 1600–1871 (EYYGTSDVTF…KVEVNPDLSN (272 aa)) form the Peptidase C16 domain. Cys-1641 serves as the catalytic For PL-PRO activity. Zn(2+) contacts are provided by Cys-1721, Cys-1724, Cys-1756, and Cys-1758. A C4-type zinc finger spans residues 1721-1758 (CTVCGIRDIEYTGMRACVYAGVNSMEELQSVFNETCVC). Active-site for PL-PRO activity residues include His-1807 and Asp-1822. The region spanning 1885–2002 (TIKYSPATIL…QLYDVAPIVL (118 aa)) is the Nucleic acid-binding domain. Positions 2019–2140 (PNVPVVEDVS…AKITVTATTA (122 aa)) constitute a G2M domain. The next 3 membrane-spanning stretches (helical) occupy residues 2119–2139 (VLLG…TATT), 2152–2172 (FVVN…LFFL), and 2229–2249 (LFLL…LVIF). The interval 2119-2402 (VLLGASSLFA…VTHIPLHGLV (284 aa)) is HD1. The 67-residue stretch at 2266-2332 (LAMYKEVRSY…LQMLQTHITS (67 aa)) folds into the 3Ecto domain. 2 disulfide bridges follow: Cys-2282–Cys-2310 and Cys-2300–Cys-2307. A run of 3 helical transmembrane segments spans residues 2333–2353 (YVLN…YVLY), 2357–2377 (FNVL…SAFV), and 2382–2402 (YNYI…HGLV). The tract at residues 2416–2506 (KFYSHVINGC…TLRRLIKPTD (91 aa)) is Y1. Residues 2416 to 2789 (KFYSHVINGC…LSVKFSATKI (374 aa)) enclose the CoV Nsp3 Y domain. The Zn(2+) site is built by His-2420, Cys-2425, Cys-2430, Cys-2433, Cys-2466, His-2469, Cys-2473, and Cys-2476. The interval 2420 to 2433 (HVINGCKDTACLLC) is ZF1. Residues 2466–2476 (CCKHNWNCVEC) are ZF2. Positions 2507 to 2605 (QSHYYVDSVV…LVDVNLVTTV (99 aa)) are Y2. Residues 2507–2789 (QSHYYVDSVV…LSVKFSATKI (283 aa)) are coV-Y. Residues 2606 to 2688 (GDSREIAIKM…DALQYAHKND (83 aa)) form a Y3 region. Residues 2689–2789 (IQLTTECYNN…LSVKFSATKI (101 aa)) are Y4. Helical transmembrane passes span 2807-2827 (GYCI…FCLP), 3079-3099 (STSL…FYYI), 3112-3132 (CAVV…FIVA), and 3156-3176 (AFIM…IWML). The segment at 2807 to 3176 (GYCILTLFVF…FGTVVPIWML (370 aa)) is HD2. The Nsp4C domain maps to 3202–3298 (VFTDGKLNCS…NCSVTSSVLQ (97 aa)). A Peptidase C30 domain is found at 3299-3604 (SGLVKMSAPS…NMQVMGVVMQ (306 aa)). Active-site for 3CL-PRO activity residues include His-3339 and Cys-3446. 7 consecutive transmembrane segments (helical) span residues 3610-3630 (ISYG…VSVM), 3644-3664 (TIPT…MFTV), 3669-3689 (TFLS…NIVY), 3714-3734 (RTTH…AIIV), 3742-3762 (MSNL…YVIG), 3791-3811 (LAKF…FILP), and 3815-3835 (LVLL…GVFS). Residues 3610 to 3835 (ISYGFMHWLM…MCTMYFGVFS (226 aa)) are HD3. Positions 3897–3979 (SKLTDLKCTS…DLFENSSVLQ (83 aa)) constitute a RdRp Nsp7 cofactor domain. The region spanning 3980 to 4178 (ATLTEFSHLA…RASSSAVKLQ (199 aa)) is the RdRp Nsp8 cofactor domain. Residues 4179–4288 (NNEIHPKGLK…GHIAATVRLQ (110 aa)) enclose the Nsp9 ssRNA-binding domain. In terms of domain architecture, ExoN/MTase coactivator spans 4289-4427 (AGANTEFASN…DALRNNTVPQ (139 aa)). 8 residues coordinate Zn(2+): Cys-4362, Cys-4365, His-4371, Cys-4378, Cys-4404, Cys-4407, Cys-4415, and Cys-4417. 2 zinc fingers span residues 4362–4378 (CLYC…SGVC) and 4404–4417 (CNVC…GCNC). The region spanning 4433–4690 (FLNRVRGSSV…AAETHKDCDF (258 aa)) is the NiRAN domain. The Mn(2+) site is built by Asn-4638 and Asp-4647. A Nsp12 Interface domain is found at 4695-4793 (IEWLLLEYDY…MNMDVNIHRH (99 aa)). Positions 4724, 4730, 4735, 4739, and 4916 each coordinate Zn(2+). Residues 4794–5361 (RLALKELMMY…DLYSSPTTLQ (568 aa)) enclose the Nsp12 RNA-dependent RNA polymerase domain. A rdRp Fingers N-ter region spans residues 4796-5010 (ALKELMMYAA…HQKMLKSMAA (215 aa)). Positions 5011–5049 (TRGATCVIGTTKFYGGWDFMLKTLYKDVESPHLMGWDYP) are rdRp Palm N-ter. Positions 5041–5203 (PHLMGWDYPK…CYNSDYAAKG (163 aa)) constitute a RdRp catalytic domain. The segment at 5050-5108 (KCDRAMPNMCRILASLILARKHSTCCTNSDRFYRLANECAQVLSEYVLCGGGYYVKPGG) is rdRp Fingers C-ter. Residues His-5071, Cys-5074, and Cys-5075 each contribute to the Zn(2+) site. The rdRp Palm C-ter stretch occupies residues 5109–5244 (TSSGDATTAY…EKGPHEFCSQ (136 aa)). Active-site residues include Ser-5188, Asp-5189, and Asp-5190. Residues 5245 to 5361 (HTLYIKDGDD…DLYSSPTTLQ (117 aa)) form a rdRp Thumb region. In terms of domain architecture, CV ZBD spans 5362-5474 (AVGSCVVCHS…MEFNRLATCD (113 aa)). The Zn(2+) site is built by Cys-5366, Cys-5369, Cys-5377, Cys-5380, Cys-5387, Cys-5390, His-5394, His-5400, Cys-5411, Cys-5416, Cys-5433, and His-5436. Residues 5618–5799 (TVPEEFANHV…MCNLGPDIFL (182 aa)) enclose the (+)RNA virus helicase ATP-binding domain. Residue 5643–5650 (GPPGTGKS) participates in ATP binding. In terms of domain architecture, (+)RNA virus helicase C-terminal spans 5800 to 5974 (SVCYRCPKEI…GLFKDCSRED (175 aa)). In terms of domain architecture, ExoN spans 6031–6246 (LFITRDEAIR…RCLAIYDCFI (216 aa)). Active-site residues include Asp-6049, Glu-6051, and Glu-6150. Residues Cys-6166, Cys-6169, Cys-6185, His-6188, His-6216, Cys-6220, and His-6223 each coordinate Zn(2+). Catalysis depends on residues His-6227 and Asp-6232. Zn(2+) is bound at residue Cys-6238. One can recognise an N7-MTase domain in the interval 6255–6482 (YPYISHEQKL…NLWSTFVKVQ (228 aa)). 6290 to 6296 (DIGNPKG) is a binding site for S-adenosyl-L-methionine. The interval 6368–6382 (CNGGSLYVNKHAFHT) is gpppA-binding. Residues Cys-6406, Cys-6428, Cys-6439, and His-6442 each contribute to the Zn(2+) site. Residues 6483–6543 (GLENIAFNVI…NVAFELYAKR (61 aa)) form the Nsp15 N-terminal oligomerization domain. The AV-Nsp11N/CoV-Nsp15M domain occupies 6544–6665 (AVRSHPDLNL…LYKKVNNEFV (122 aa)). A NendoU domain is found at 6682–6821 (TALTPMEEDF…KDGKVQTFYP (140 aa)). Residues His-6712, His-6727, Lys-6767, Lys-6870, Asp-6954, Lys-6994, and Glu-7027 contribute to the active site. Positions 6826-7120 (TNDWKPGLTM…TLNVSTDVLV (295 aa)) constitute a Nidovirus-type SAM-dependent 2'-O-MTase domain.

It belongs to the coronaviruses polyprotein 1ab family. In terms of assembly, interacts with host PHB and PHB2. Interacts with papain-like protease nsp3 and non-structural protein 6. As to quaternary structure, monomer. Homodimer. Only the homodimer shows catalytic activity. In terms of assembly, interacts with nsp8 and nsp12 to form the replication-transcription complex (RTC): nsp12, nsp7, two subunits of nsp8, and up to two subunits of nsp13. Interacts with nsp7, nsp13 and nsp12 to form the replication-transcription complex (RTC): nsp12, nsp7, two subunits of nsp8, and up to two subunits of nsp13. As to quaternary structure, interacts with nsp12. In terms of assembly, interacts with proofreading exoribonuclease nsp14 and 2'-O-methyltransferase nsp16; these interactions enhance nsp14 and nsp16 enzymatic activities. Interacts with nsp7 and nsp8 to form the replication-transcription complex (RTC): nsp12, nsp7, two subunits of nsp8, and up to two subunits of nsp13. Interacts with nsp9. As to quaternary structure, interacts with nsp8 to form the replication-transcription complex (RTC): nsp12, nsp7, two subunits of nsp8, and up to two subunits of nsp13. Mn(2+) serves as cofactor. Mg(2+) is required as a cofactor. Specific enzymatic cleavages in vivo by its own proteases yield mature proteins. 3CL-PRO and PL-PRO proteinases are autocatalytically processed.

Its subcellular location is the host membrane. The protein resides in the host cytoplasm. The protein localises to the host perinuclear region. It localises to the host endoplasmic reticulum-Golgi intermediate compartment. It carries out the reaction ATP + H2O = ADP + phosphate + H(+). The catalysed reaction is RNA(n) + a ribonucleoside 5'-triphosphate = RNA(n+1) + diphosphate. The enzyme catalyses Thiol-dependent hydrolysis of ester, thioester, amide, peptide and isopeptide bonds formed by the C-terminal Gly of ubiquitin (a 76-residue protein attached to proteins as an intracellular targeting signal).. It catalyses the reaction a 5'-end (N(7)-methyl 5'-triphosphoguanosine)-ribonucleoside in mRNA + S-adenosyl-L-methionine = a 5'-end (N(7)-methyl 5'-triphosphoguanosine)-(2'-O-methyl-ribonucleoside) in mRNA + S-adenosyl-L-homocysteine + H(+). It carries out the reaction uridylyl-uridylyl-ribonucleotide-RNA = a 3'-end uridylyl-2',3'-cyclophospho-uridine-RNA + a 5'-end dephospho-ribonucleoside-RNA. The catalysed reaction is a 5'-end diphospho-ribonucleoside in mRNA + GTP + H(+) = a 5'-end (5'-triphosphoguanosine)-ribonucleoside in mRNA + diphosphate. The enzyme catalyses a 5'-end (5'-triphosphoguanosine)-ribonucleoside in mRNA + S-adenosyl-L-methionine = a 5'-end (N(7)-methyl 5'-triphosphoguanosine)-ribonucleoside in mRNA + S-adenosyl-L-homocysteine. The replicase polyprotein of coronaviruses is a multifunctional protein: it contains the activities necessary for the transcription of negative stranded RNA, leader RNA, subgenomic mRNAs and progeny virion RNA as well as proteinases responsible for the cleavage of the polyprotein into functional products. Its function is as follows. Inhibits host translation by interacting with the 40S ribosomal subunit. The nsp1-40S ribosome complex further induces an endonucleolytic cleavage near the 5'UTR of host mRNAs, targeting them for degradation. Viral mRNAs are not susceptible to nsp1-mediated endonucleolytic RNA cleavage thanks to the presence of a 5'-end leader sequence and are therefore protected from degradation. By suppressing host gene expression, nsp1 facilitates efficient viral gene expression in infected cells and evasion from host immune response. In terms of biological role, may play a role in the modulation of host cell survival signaling pathway by interacting with host PHB and PHB2. Indeed, these two proteins play a role in maintaining the functional integrity of the mitochondria and protecting cells from various stresses. Functionally, responsible for the cleavages located at the N-terminus of the replicase polyprotein. In addition, PL-PRO possesses a deubiquitinating/deISGylating activity and processes both 'Lys-48'- and 'Lys-63'-linked polyubiquitin chains from cellular substrates. Participates together with nsp4 in the assembly of virally-induced cytoplasmic double-membrane vesicles necessary for viral replication. Antagonizes innate immune induction of type I interferon by blocking the phosphorylation, dimerization and subsequent nuclear translocation of host IRF3. Also prevents host NF-kappa-B signaling. Participates in the assembly of virally-induced cytoplasmic double-membrane vesicles necessary for viral replication. Its function is as follows. Cleaves the C-terminus of replicase polyprotein at 11 sites. Recognizes substrates containing the core sequence [ILMVF]-Q-|-[SGACN]. Also able to bind an ADP-ribose-1''-phosphate (ADRP). In terms of biological role, plays a role in the initial induction of autophagosomes from host endoplasmic reticulum. Later, limits the expansion of these phagosomes that are no longer able to deliver viral components to lysosomes. Functionally, forms a hexadecamer with nsp8 (8 subunits of each) that may participate in viral replication by acting as a primase. Alternatively, may synthesize substantially longer products than oligonucleotide primers. Forms a hexadecamer with nsp7 (8 subunits of each) that may participate in viral replication by acting as a primase. Alternatively, may synthesize substantially longer products than oligonucleotide primers. Its function is as follows. Forms a primer, NSP9-pU, which is utilized by the polymerase for the initiation of RNA chains. Interacts with ribosome signal recognition particle RNA (SRP). Together with NSP8, suppress protein integration into the cell membrane, thereby disrupting host immune defenses. In terms of biological role, plays a pivotal role in viral transcription by stimulating both nsp14 3'-5' exoribonuclease and nsp16 2'-O-methyltransferase activities. Therefore plays an essential role in viral mRNAs cap methylation. Functionally, RNA-directed RNA polymerase that catalyzes the transcription of viral genomic and subgenomic RNAs. Acts in complex with nsp7 and nsp8 to transcribe both the minus and positive strands of genomic RNA. The kinase-like NiRAN domain of NSP12 attaches one or more nucleotides to the amino terminus of NSP9, forming a covalent RNA-protein intermediate that serves as transcription/replication primer. Subgenomic RNAs (sgRNAs) are formed by discontinuous transcription: The polymerase has the ability to pause at transcription-regulating sequences (TRS) and jump to the leader TRS, resulting in a major deletion. This creates a series of subgenomic RNAs that are replicated, transcribed and translated. In addition, Nsp12 is a subunit of the viral RNA capping enzyme that catalyzes the RNA guanylyltransferase reaction for genomic and sub-genomic RNAs. Subsequently, the NiRAN domain transfers RNA to GDP, and forms the core cap structure GpppA-RNA. Multi-functional protein with a zinc-binding domain in N-terminus displaying RNA and DNA duplex-unwinding activities with 5' to 3' polarity. Activity of helicase is dependent on magnesium. Its function is as follows. Plays a role in viral RNA synthesis through two distinct activities. The N7-guanine methyltransferase activity plays a role in the formation of the cap structure GpppA-RNA. The proofreading exoribonuclease reduces the sensitivity of the virus to RNA mutagens during replication. This activity acts on both ssRNA and dsRNA in a 3'-5' direction. In terms of biological role, plays a role in viral transcription/replication and prevents the simultaneous activation of host cell dsRNA sensors, such as MDA5/IFIH1, OAS, and PKR. Acts by degrading the 5'-polyuridines generated during replication of the poly(A) region of viral genomic and subgenomic RNAs. Catalyzes a two-step reaction in which a 2'3'-cyclic phosphate (2'3'-cP) is first generated by 2'-O transesterification, which is then hydrolyzed to a 3'-phosphate (3'-P). If not degraded, poly(U) RNA would hybridize with poly(A) RNA tails and activate host dsRNA sensors. Functionally, methyltransferase that mediates mRNA cap 2'-O-ribose methylation to the 5'-cap structure of viral mRNAs. N7-methyl guanosine cap is a prerequisite for binding of nsp16. Therefore plays an essential role in viral mRNAs cap methylation which is essential to evade immune system. The polypeptide is Replicase polyprotein 1ab (rep) (Bat coronavirus 133/2005 (BtCoV)).